Consider the following 418-residue polypeptide: Outer membrane protein assembly factor BamB (418 aa).

The first 28 residues, 1 to 28 (MFHNTCGRKGRFARAMGMALAISVTLSG), serve as a signal peptide directing secretion. Residue C29 is the site of N-palmitoyl cysteine attachment. C29 is lipidated: S-diacylglycerol cysteine.

Belongs to the BamB family. In terms of assembly, part of the Bam complex.

The protein resides in the cell outer membrane. In terms of biological role, part of the outer membrane protein assembly complex, which is involved in assembly and insertion of beta-barrel proteins into the outer membrane. The chain is Outer membrane protein assembly factor BamB from Alteromonas naphthalenivorans.